The chain runs to 279 residues: Thioredoxin-like 1-2, chloroplastic (279 aa).

Residues 1–34 (MAATAAQAVAVKGSVAVPPCGSRGRRRGAVASVR) constitute a chloroplast transit peptide. The region spanning 61-203 (PRRSRPVPRN…FRDALAKHKP (143 aa)) is the Thioredoxin domain. Residues C126 and C129 each act as nucleophile in the active site. C126 and C129 are disulfide-bonded. The segment at 242-279 (GDAAAAQELDRGSTKLSPPAKPLVKQGSEERSLVSSGR) is disordered.

This sequence belongs to the thioredoxin family.

It is found in the plastid. The protein localises to the chloroplast. Probable thiol-disulfide oxidoreductase that may participate in various redox reactions. The protein is Thioredoxin-like 1-2, chloroplastic of Oryza sativa subsp. japonica (Rice).